The chain runs to 884 residues: Probable mixed-linked glucan synthase 9 (884 aa).

Positions 1-27 are enriched in low complexity; it reads MALSPAAAGRTGRNNNNDAGLADPLLP. A disordered region spans residues 1–34; sequence MALSPAAAGRTGRNNNNDAGLADPLLPAGGGGGG. 2 helical membrane-spanning segments follow: residues 73 to 93 and 104 to 124; these read VLLH…VLFL and AMWL…TWLL. D195 is a catalytic residue. Residues D396 and D398 each contribute to the substrate site. D565 is an active-site residue. 6 helical membrane passes run 640–660, 672–692, 708–728, 765–785, 802–822, and 830–850; these read TAYP…VIWL, FSTY…IGLV, EQFY…HIVL, LLAP…AAAG, AGLV…LGIM, and CALF…FVAV.

The protein belongs to the glycosyltransferase 2 family. Plant cellulose synthase-like F subfamily.

The protein localises to the golgi apparatus membrane. Functionally, may catalyze both beta-1,3 and beta-1,4 glycosidic linkage on beta-D-glucan. Essential for (1,3;1,4)-beta-D-glucans synthesis in grasses and cereals (Poaceae). The mixed-linked glucans (which are not present in walls of dicotyledons or most other monocotyledonous plants) are particularly important constituents of the walls of the starchy endosperm and aleurone cells of cereal grains such as oats, wheat, rice and barley. They can account for up to 70% by weight of the wall. This Oryza sativa subsp. japonica (Rice) protein is Probable mixed-linked glucan synthase 9 (CSLF9).